The sequence spans 279 residues: Replication protein A 32 kDa subunit A (279 aa).

Residues 1–39 (MMSFSQPDAFSPSQFTSSQNAAADSTTPSKSRGASSTMP) form a disordered region. The segment at residues 71–145 (VRLVGLVSGK…RATAFAIRPV (75 aa)) is a DNA-binding region (OB). The segment at 181–210 (GSSSSNGFSEMTTPTSVKSNPAPVLSVTNG) is disordered. The segment covering 190 to 199 (EMTTPTSVKS) has biased composition (polar residues).

Belongs to the replication factor A protein 2 family. As to quaternary structure, heterotrimer of RPA1, RPA2 and RPA3 (canonical replication protein A complex). Interacts with RPA1A, RPA1B and RPA3. In terms of processing, phosphorylated in a cell-cycle-dependent manner (from the S phase until mitosis). In response to DNA damage, recruited to DNA-repair nuclear foci, as a hypophosphorylated form. Expressed in root tips, roots, shoot apical meristem (SAM), young leaves, flag leaves and ears, and at lower levels in mature leaves.

It is found in the nucleus. Its function is as follows. Component of the replication protein A complex (RPA) required for DNA recombination, repair and replication. The activity of RPA is mediated by single-stranded DNA binding and protein interactions. In Oryza sativa subsp. japonica (Rice), this protein is Replication protein A 32 kDa subunit A (RPA2A).